The following is a 358-amino-acid chain: Phospho-N-acetylmuramoyl-pentapeptide-transferase (358 aa).

The next 10 helical transmembrane spans lie at 24-44 (FRSI…GPWV), 73-93 (TMGG…WADL), 95-115 (NVFI…GFVD), 134-154 (MFWQ…LPGF), 169-189 (ELGI…SNAV), 197-217 (GLAI…CYIA), 233-253 (GAGE…GFLW), 261-281 (VFMG…LAVL), 286-306 (ILLV…IFQV), and 335-355 (KIIV…ISTL).

The protein belongs to the glycosyltransferase 4 family. MraY subfamily. It depends on Mg(2+) as a cofactor.

Its subcellular location is the cell inner membrane. The catalysed reaction is UDP-N-acetyl-alpha-D-muramoyl-L-alanyl-gamma-D-glutamyl-meso-2,6-diaminopimeloyl-D-alanyl-D-alanine + di-trans,octa-cis-undecaprenyl phosphate = di-trans,octa-cis-undecaprenyl diphospho-N-acetyl-alpha-D-muramoyl-L-alanyl-D-glutamyl-meso-2,6-diaminopimeloyl-D-alanyl-D-alanine + UMP. It functions in the pathway cell wall biogenesis; peptidoglycan biosynthesis. Functionally, catalyzes the initial step of the lipid cycle reactions in the biosynthesis of the cell wall peptidoglycan: transfers peptidoglycan precursor phospho-MurNAc-pentapeptide from UDP-MurNAc-pentapeptide onto the lipid carrier undecaprenyl phosphate, yielding undecaprenyl-pyrophosphoryl-MurNAc-pentapeptide, known as lipid I. The polypeptide is Phospho-N-acetylmuramoyl-pentapeptide-transferase (Geobacter sp. (strain M21)).